Reading from the N-terminus, the 803-residue chain is Ubiquitin carboxyl-terminal hydrolase 45 (803 aa).

The interval 1-34 is disordered; that stretch reads MRLKDPFSLKTADMTKRSNKPKKPRDEDSSDEVG. Residues 36–153 form a UBP-type zinc finger; the sequence is LTCQHVSRAV…QTLDFLQKQS (118 aa). Zn(2+) contacts are provided by cysteine 38, histidine 40, cysteine 62, cysteine 65, cysteine 85, cysteine 88, cysteine 93, histidine 100, histidine 104, histidine 113, cysteine 126, and cysteine 129. In terms of domain architecture, USP spans 192-802; it reads KGINNLGNTC…QAYLLFYEEL (611 aa). Cysteine 201 acts as the Nucleophile in catalysis. Residues 394–554 are disordered; the sequence is PTNPARLGKS…LPSIRPQQGG (161 aa). The span at 403–417 shows a compositional bias: basic and acidic residues; it reads SGREQDSLTSHDDSL. 2 stretches are compositionally biased toward polar residues: residues 419 to 440 and 469 to 480; these read AHSQANRNSRRLSGQKLQSRHS and SYRTDTMGSQSD. Residues 502-531 show a composition bias toward low complexity; sequence SEWSPRIPSVSSHSSTSDKTSITTTLSTTT. Residues 532-545 show a composition bias toward polar residues; that stretch reads HNPSLKSNPSSTPL. Catalysis depends on histidine 739, which acts as the Proton acceptor.

It belongs to the peptidase C19 family. As to expression, retina.

It localises to the photoreceptor inner segment. Its subcellular location is the cytoplasm. The protein resides in the nucleus. The enzyme catalyses Thiol-dependent hydrolysis of ester, thioester, amide, peptide and isopeptide bonds formed by the C-terminal Gly of ubiquitin (a 76-residue protein attached to proteins as an intracellular targeting signal).. Functionally, catalyzes the deubiquitination of SPDL1. Plays a role in the repair of UV-induced DNA damage via deubiquitination of ERCC1, promoting its recruitment to DNA damage sites. May be involved in the maintenance of photoreceptor function. May play a role in normal retinal development. The sequence is that of Ubiquitin carboxyl-terminal hydrolase 45 from Danio rerio (Zebrafish).